The sequence spans 345 residues: V-type proton ATPase subunit d (345 aa).

Methionine 1 is modified (N-acetylmethionine).

Belongs to the V-ATPase V0D/AC39 subunit family. As to quaternary structure, V-ATPase is a heteromultimeric enzyme composed of a peripheral catalytic V1 complex (components A to H) attached to an integral membrane V0 proton pore complex (components: a, c, c', c'', d, e, f and VOA1).

The protein resides in the vacuole membrane. Functionally, subunit of the V0 complex of vacuolar(H+)-ATPase (V-ATPase), a multisubunit enzyme composed of a peripheral complex (V1) that hydrolyzes ATP and a membrane integral complex (V0) that translocates protons. V-ATPase is responsible for acidifying and maintaining the pH of intracellular compartments. This subunit is a non-integral membrane component of the membrane pore domain and is required for proper assembly of the V0 sector. Might be involved in the regulated assembly of V1 subunits onto the membrane sector or alternatively may prevent the passage of protons through V0 pores. This chain is V-type proton ATPase subunit d, found in Saccharomyces cerevisiae (strain ATCC 204508 / S288c) (Baker's yeast).